We begin with the raw amino-acid sequence, 190 residues long: MSNPVKGRHQARKRAVDLLFEAEARDLSPLEIIEVRSALAKSKLDVAPLHPYTVVVAQGVSEHTARIDELIISHLQGWKLDRLPAVDRAILRVSIWELLYADDVPEPVAVDEAVELAKELSTDDSPGFVNGLLGKVMLVTPQIRAAAQAVQQAVRMAAGTSEDHVPQREPAAGQLGQDDSNGGQVAAVCR.

Residues 158–190 are disordered; it reads AGTSEDHVPQREPAAGQLGQDDSNGGQVAAVCR.

Belongs to the NusB family.

Functionally, involved in transcription antitermination. Required for transcription of ribosomal RNA (rRNA) genes. Binds specifically to the boxA antiterminator sequence of the ribosomal RNA (rrn) operons. This chain is Transcription antitermination protein NusB, found in Mycobacterium leprae (strain TN).